The sequence spans 256 residues: Enolase-phosphatase E1 (256 aa).

Mg(2+)-binding residues include D14 and E16. Substrate is bound by residues 142 to 143 (SS) and K176. D201 provides a ligand contact to Mg(2+).

This sequence belongs to the HAD-like hydrolase superfamily. MasA/MtnC family. In terms of assembly, monomer. It depends on Mg(2+) as a cofactor.

It is found in the cytoplasm. It localises to the nucleus. It catalyses the reaction 5-methylsulfanyl-2,3-dioxopentyl phosphate + H2O = 1,2-dihydroxy-5-(methylsulfanyl)pent-1-en-3-one + phosphate. It participates in amino-acid biosynthesis; L-methionine biosynthesis via salvage pathway; L-methionine from S-methyl-5-thio-alpha-D-ribose 1-phosphate: step 3/6. Its pathway is amino-acid biosynthesis; L-methionine biosynthesis via salvage pathway; L-methionine from S-methyl-5-thio-alpha-D-ribose 1-phosphate: step 4/6. Functionally, bifunctional enzyme that catalyzes the enolization of 2,3-diketo-5-methylthiopentyl-1-phosphate (DK-MTP-1-P) into the intermediate 2-hydroxy-3-keto-5-methylthiopentenyl-1-phosphate (HK-MTPenyl-1-P), which is then dephosphorylated to form the acireductone 1,2-dihydroxy-3-keto-5-methylthiopentene (DHK-MTPene). The protein is Enolase-phosphatase E1 of Drosophila yakuba (Fruit fly).